We begin with the raw amino-acid sequence, 466 residues long: 3-isopropylmalate dehydratase large subunit (466 aa).

Residues Cys347, Cys407, and Cys410 each coordinate [4Fe-4S] cluster.

Belongs to the aconitase/IPM isomerase family. LeuC type 1 subfamily. As to quaternary structure, heterodimer of LeuC and LeuD. [4Fe-4S] cluster serves as cofactor.

It carries out the reaction (2R,3S)-3-isopropylmalate = (2S)-2-isopropylmalate. It functions in the pathway amino-acid biosynthesis; L-leucine biosynthesis; L-leucine from 3-methyl-2-oxobutanoate: step 2/4. Functionally, catalyzes the isomerization between 2-isopropylmalate and 3-isopropylmalate, via the formation of 2-isopropylmaleate. This chain is 3-isopropylmalate dehydratase large subunit, found in Escherichia coli O139:H28 (strain E24377A / ETEC).